Consider the following 687-residue polypeptide: Outer dynein arm-docking complex subunit 1 (687 aa).

Coiled-coil stretches lie at residues 100 to 193 (QVRV…YLNV), 222 to 267 (REEA…LKLK), and 341 to 421 (INEQ…LFTR). Residues 126 to 147 (SRNSAHSKNARSPGCVQHDKVK) are disordered. Disordered regions lie at residues 363–388 (VSGR…QRVD), 487–511 (FPKK…AKDD), and 540–687 (ESTP…QSNY). Residues 366–388 (RRSEEDRRAQQEQQRAELQQRVD) show a composition bias toward basic and acidic residues. Positions 544-556 (SMTSSTQKVSSSS) are enriched in low complexity. 2 stretches are compositionally biased toward polar residues: residues 557-611 (RLVT…SSRG) and 620-629 (RSPNSSSYLG). The segment covering 660–680 (SPGPASSPGPASSTGQASSTS) has biased composition (low complexity).

It belongs to the ODA1/DCC2 family. As to quaternary structure, component of the outer dynein arm-docking complex along with ODAD2, ODAD3, ODAD4 and CLXN. Interacts with ODAD3. Interacts with ODAD4; this interaction may facilitate the recruitment and/or attachment of outer dynein arm docking complex proteins, including ODAD1, ODAD3, and ODAD4 to ciliary axonemes. Interacts with DNAH9. Interacts with MNS1. Interacts with PIERCE1 and PIERCE2; the interactions link the outer dynein arms docking complex (ODA-DC) to the internal microtubule inner proteins (MIP) in cilium axoneme. In terms of tissue distribution, expressed in trachea multiciliated cells.

It localises to the cytoplasm. It is found in the cytoskeleton. Its subcellular location is the cilium axoneme. Functionally, component of the outer dynein arm-docking complex (ODA-DC) that mediates outer dynein arms (ODA) binding onto the doublet microtubule. Involved in mediating assembly of both ODAs and their axonemal docking complex onto ciliary microtubules. In Bos taurus (Bovine), this protein is Outer dynein arm-docking complex subunit 1 (ODAD1).